We begin with the raw amino-acid sequence, 432 residues long: MEKITLAPISAVEGTINLPGSKSLSNRALLLAALAKGTTKVTNLLDSDDIRHMLNALKALGVRYQLSDDKTICEIEGLGGAFNIQNNLSLFLGNAGTAMRPLTAALCLKGKTESEIILTGEPRMKERPILHLVDALRQAGADIRYLENEGYPPLAIRNKGIKGGKVKIDGSISSQFLTALLMSTPLAENDTEIEIIGELVSKPYIDITLAMMRDFGVKVENHHYQKFQVKGNQSYISPNKYLVEGDASSASYFLAAGAIKGKVKVTGIGKNSIQGDRLFADVLEKMGAKITWGEDFIQAEYAELNGIDMDMNHIPDAAMTIATTALFANGETVIRNIYNWRVKETDRLTAMATELRKIGAEVEEGEDFIRIQPLPLNQFKHANIETYNDHRMAMCFSLIALSNTPVTILDPKCTAKTFPTFFNEFEKICLKN.

Residues K22, S23, and R27 each contribute to the 3-phosphoshikimate site. Phosphoenolpyruvate is bound at residue K22. Phosphoenolpyruvate contacts are provided by G96 and R127. Residues S173, S174, Q175, S201, D316, N339, and K343 each coordinate 3-phosphoshikimate. Q175 contributes to the phosphoenolpyruvate binding site. D316 (proton acceptor) is an active-site residue. Phosphoenolpyruvate is bound by residues R347, R391, and K416.

It belongs to the EPSP synthase family. In terms of assembly, monomer.

It is found in the cytoplasm. The catalysed reaction is 3-phosphoshikimate + phosphoenolpyruvate = 5-O-(1-carboxyvinyl)-3-phosphoshikimate + phosphate. It functions in the pathway metabolic intermediate biosynthesis; chorismate biosynthesis; chorismate from D-erythrose 4-phosphate and phosphoenolpyruvate: step 6/7. In terms of biological role, catalyzes the transfer of the enolpyruvyl moiety of phosphoenolpyruvate (PEP) to the 5-hydroxyl of shikimate-3-phosphate (S3P) to produce enolpyruvyl shikimate-3-phosphate and inorganic phosphate. The polypeptide is 3-phosphoshikimate 1-carboxyvinyltransferase (Haemophilus influenzae (strain PittGG)).